The sequence spans 461 residues: Complement C1r subcomponent-like protein (461 aa).

Residues 1–22 form the signal peptide; sequence MCWLLLWGILHTCPTQASVLLA. The CUB domain occupies 23–139; it reads QQFPQQLTSP…KGFLALYQAA (117 aa). 2 disulfides stabilise this stretch: cysteine 71–cysteine 89 and cysteine 164–cysteine 197. One can recognise a Sushi domain in the interval 138-199; the sequence is AAVSQPNGDA…RGEEVPECVP (62 aa). One can recognise a Peptidase S1 domain in the interval 214–453; it reads TFGSSRAKPG…YVDWIKGVIE (240 aa). Histidine 252 serves as the catalytic Charge relay system. Asparagine 265 carries N-linked (GlcNAc...) asparagine glycosylation. The active-site Charge relay system is aspartate 308. N-linked (GlcNAc...) asparagine glycosylation occurs at asparagine 332. 2 disulfide bridges follow: cysteine 371/cysteine 390 and cysteine 401/cysteine 431. The Charge relay system role is filled by serine 405.

This sequence belongs to the peptidase S1 family.

The protein resides in the secreted. Its function is as follows. Mediates the proteolytic cleavage of HP/haptoglobin in the endoplasmic reticulum. This chain is Complement C1r subcomponent-like protein (C1rl), found in Rattus norvegicus (Rat).